The following is a 166-amino-acid chain: Large ribosomal subunit protein uL10 (166 aa).

This sequence belongs to the universal ribosomal protein uL10 family. As to quaternary structure, part of the ribosomal stalk of the 50S ribosomal subunit. The N-terminus interacts with L11 and the large rRNA to form the base of the stalk. The C-terminus forms an elongated spine to which L12 dimers bind in a sequential fashion forming a multimeric L10(L12)X complex.

Forms part of the ribosomal stalk, playing a central role in the interaction of the ribosome with GTP-bound translation factors. This Bacillus velezensis (strain DSM 23117 / BGSC 10A6 / LMG 26770 / FZB42) (Bacillus amyloliquefaciens subsp. plantarum) protein is Large ribosomal subunit protein uL10.